The sequence spans 153 residues: Small heat shock protein ibp (153 aa).

One can recognise a sHSP domain in the interval 35 to 153 (KIISDSVPPY…KIQKIQINVK (119 aa)).

This sequence belongs to the small heat shock protein (HSP20) family.

The protein is Small heat shock protein ibp (ibp) of Buchnera aphidicola subsp. Thelaxes suberi.